The following is a 389-amino-acid chain: Indole-3-acetate monooxygenase (389 aa).

The protein belongs to the HpaH/HsaA monooxygenase family.

The catalysed reaction is (indol-3-yl)acetate + NADH + O2 + H(+) = 2-hydroxy-(1H-indol-3-yl)acetate + NAD(+) + H2O. It catalyses the reaction indole + NADH + O2 + H(+) = indoxyl + NAD(+) + H2O. Involved in the degradation of the plant hormone indole-3-acetic acid (IAA). Catalyzes the first step of the pathway, the conversion of IAA to 2-hydroxy-IAA (2-OH-IAA). Can also convert indole to indoxyl, which spontaneously dimerizes in the presence of oxygen to form the blue pigment indigo. The chain is Indole-3-acetate monooxygenase from Acinetobacter baumannii (strain ATCC 19606 / DSM 30007 / JCM 6841 / CCUG 19606 / CIP 70.34 / NBRC 109757 / NCIMB 12457 / NCTC 12156 / 81).